A 230-amino-acid polypeptide reads, in one-letter code: Transcriptional regulatory protein CitT (230 aa).

Positions 6 to 124 (KVLIIEDDFR…VLHQRLDAYV (119 aa)) constitute a Response regulatory domain. D59 bears the 4-aspartylphosphate mark. The H-T-H motif DNA-binding region spans 184–203 (AMEGARLIGASRSTVRRYFE).

Phosphorylated by CitS.

It is found in the cytoplasm. Member of the two-component regulatory system CitT/CitS. The polypeptide is Transcriptional regulatory protein CitT (citT) (Halalkalibacterium halodurans (strain ATCC BAA-125 / DSM 18197 / FERM 7344 / JCM 9153 / C-125) (Bacillus halodurans)).